We begin with the raw amino-acid sequence, 668 residues long: Biosynthetic arginine decarboxylase (668 aa).

Residue K105 is modified to N6-(pyridoxal phosphate)lysine. 286–296 (LDVGGGLGVDY) serves as a coordination point for substrate.

This sequence belongs to the Orn/Lys/Arg decarboxylase class-II family. SpeA subfamily. Mg(2+) serves as cofactor. It depends on pyridoxal 5'-phosphate as a cofactor.

It catalyses the reaction L-arginine + H(+) = agmatine + CO2. Functionally, catalyzes the biosynthesis of agmatine from arginine. In Rhodopirellula baltica (strain DSM 10527 / NCIMB 13988 / SH1), this protein is Biosynthetic arginine decarboxylase.